We begin with the raw amino-acid sequence, 474 residues long: Ribulose bisphosphate carboxylase/oxygenase activase, chloroplastic (474 aa).

The transit peptide at Met-1–Leu-58 directs the protein to the chloroplast. The residue at position 78 (Thr-78) is a Phosphothreonine; by CK2. An ATP-binding site is contributed by Gly-165–Ser-172. Phosphothreonine is present on Thr-283.

It belongs to the RuBisCO activase family. Phosphorylated at Thr-78 by CK2.

It localises to the plastid. It is found in the chloroplast stroma. The protein localises to the chloroplast. Its subcellular location is the plastoglobule. Activation of RuBisCO (ribulose-1,5-bisphosphate carboxylase/oxygenase; EC 4.1.1.39) involves the ATP-dependent carboxylation of the epsilon-amino group of lysine leading to a carbamate structure. The protein is Ribulose bisphosphate carboxylase/oxygenase activase, chloroplastic (RCA) of Arabidopsis thaliana (Mouse-ear cress).